A 184-amino-acid polypeptide reads, in one-letter code: Photosystem I assembly protein Ycf4 (184 aa).

The next 2 helical transmembrane spans lie at 19–39 and 57–77; these read ISNF…VLVG and ILFF…LFIS.

This sequence belongs to the Ycf4 family.

It localises to the plastid. It is found in the chloroplast thylakoid membrane. Seems to be required for the assembly of the photosystem I complex. The polypeptide is Photosystem I assembly protein Ycf4 (Eucalyptus globulus subsp. globulus (Tasmanian blue gum)).